The following is a 1355-amino-acid chain: DNA-directed RNA polymerase subunit beta' (1355 aa).

Positions 219, 293, 300, and 303 each coordinate Zn(2+). The disordered stretch occupies residues 1331–1355; sequence AEVEVDDEVDDDYEDDDEDDDDYED.

The protein belongs to the RNA polymerase beta' chain family. RpoC2 subfamily. As to quaternary structure, in cyanobacteria the RNAP catalytic core is composed of 2 alpha, 1 beta, 1 beta', 1 gamma and 1 omega subunit. When a sigma factor is associated with the core the holoenzyme is formed, which can initiate transcription. Requires Zn(2+) as cofactor.

It carries out the reaction RNA(n) + a ribonucleoside 5'-triphosphate = RNA(n+1) + diphosphate. Its function is as follows. DNA-dependent RNA polymerase catalyzes the transcription of DNA into RNA using the four ribonucleoside triphosphates as substrates. This Nostoc sp. (strain PCC 7120 / SAG 25.82 / UTEX 2576) protein is DNA-directed RNA polymerase subunit beta'.